The following is a 585-amino-acid chain: Arginine--tRNA ligase (585 aa).

The 'HIGH' region signature appears at 131–141; that stretch reads ANPTGPMHVGH.

Belongs to the class-I aminoacyl-tRNA synthetase family. In terms of assembly, monomer.

The protein localises to the cytoplasm. It catalyses the reaction tRNA(Arg) + L-arginine + ATP = L-arginyl-tRNA(Arg) + AMP + diphosphate. The protein is Arginine--tRNA ligase of Brucella suis (strain ATCC 23445 / NCTC 10510).